Consider the following 451-residue polypeptide: Phosphoglucosamine mutase (451 aa).

The active-site Phosphoserine intermediate is the Ser103. Residues Ser103, Asp243, Asp245, and Asp247 each coordinate Mg(2+). Ser103 is subject to Phosphoserine.

It belongs to the phosphohexose mutase family. The cofactor is Mg(2+). Activated by phosphorylation.

The catalysed reaction is alpha-D-glucosamine 1-phosphate = D-glucosamine 6-phosphate. Catalyzes the conversion of glucosamine-6-phosphate to glucosamine-1-phosphate. This Levilactobacillus brevis (strain ATCC 367 / BCRC 12310 / CIP 105137 / JCM 1170 / LMG 11437 / NCIMB 947 / NCTC 947) (Lactobacillus brevis) protein is Phosphoglucosamine mutase.